Consider the following 97-residue polypeptide: Pyrin domain-containing protein 2 (97 aa).

Residues 1–94 form the Pyrin domain; the sequence is MASSAELDFN…SGRADEHCVM (94 aa).

In terms of assembly, interacts with PYCARD/ASC (via pyrin domain). Interacts with NLRP2 (via pyrin domain). Predominantly expressed in peripheral blood. Weakly expressed in testis.

It localises to the cytoplasm. The protein resides in the nucleus. In terms of biological role, may play a role in innate immunity by disrupting the interaction between PYCARD and NLRP3, thereby regulating the NLRP3 inflammasome. May also inhibit NF-kappa-B signaling distally by affecting the nuclear accumulation of RELA. In Homo sapiens (Human), this protein is Pyrin domain-containing protein 2.